Consider the following 103-residue polypeptide: Neuraminidase (103 aa).

A helical; Signal-anchor for type II membrane protein membrane pass occupies residues G1–S18. Residues H19–P103 lie on the Virion surface side of the membrane. N-linked (GlcNAc...) asparagine; by host glycosylation is found at N27, N41, N46, N51, and N71. A substrate-binding site is contributed by R101.

It belongs to the glycosyl hydrolase 34 family. Homotetramer. Ca(2+) serves as cofactor. In terms of processing, N-glycosylated.

The protein resides in the virion membrane. It localises to the host apical cell membrane. The catalysed reaction is Hydrolysis of alpha-(2-&gt;3)-, alpha-(2-&gt;6)-, alpha-(2-&gt;8)- glycosidic linkages of terminal sialic acid residues in oligosaccharides, glycoproteins, glycolipids, colominic acid and synthetic substrates.. With respect to regulation, inhibited by the neuraminidase inhibitors zanamivir (Relenza) and oseltamivir (Tamiflu). These drugs interfere with the release of progeny virus from infected cells and are effective against all influenza strains. Resistance to neuraminidase inhibitors is quite rare. Catalyzes the removal of terminal sialic acid residues from viral and cellular glycoconjugates. Cleaves off the terminal sialic acids on the glycosylated HA during virus budding to facilitate virus release. Additionally helps virus spread through the circulation by further removing sialic acids from the cell surface. These cleavages prevent self-aggregation and ensure the efficient spread of the progeny virus from cell to cell. Otherwise, infection would be limited to one round of replication. Described as a receptor-destroying enzyme because it cleaves a terminal sialic acid from the cellular receptors. May facilitate viral invasion of the upper airways by cleaving the sialic acid moieties on the mucin of the airway epithelial cells. Likely to plays a role in the budding process through its association with lipid rafts during intracellular transport. May additionally display a raft-association independent effect on budding. Plays a role in the determination of host range restriction on replication and virulence. Sialidase activity in late endosome/lysosome traffic seems to enhance virus replication. The protein is Neuraminidase (NA) of Influenza A virus (strain A/Camel/Mongolia/1982 H1N1).